The following is a 349-amino-acid chain: Holliday junction branch migration complex subunit RuvB (349 aa).

The large ATPase domain (RuvB-L) stretch occupies residues 1–185 (MSQEKERLIS…FGSIFRLDFY (185 aa)). Residues L24, R25, G66, K69, T70, T71, 132–134 (EDY), R175, Y185, and R222 contribute to the ATP site. Residue T70 participates in Mg(2+) binding. The interval 186–256 (DEEAIHDIVR…IAAESLACLE (71 aa)) is small ATPAse domain (RuvB-S). The interval 259–349 (KLGLDEIDHK…QQGLWTENGS (91 aa)) is head domain (RuvB-H). DNA-binding residues include R314 and R319.

The protein belongs to the RuvB family. As to quaternary structure, homohexamer. Forms an RuvA(8)-RuvB(12)-Holliday junction (HJ) complex. HJ DNA is sandwiched between 2 RuvA tetramers; dsDNA enters through RuvA and exits via RuvB. An RuvB hexamer assembles on each DNA strand where it exits the tetramer. Each RuvB hexamer is contacted by two RuvA subunits (via domain III) on 2 adjacent RuvB subunits; this complex drives branch migration. In the full resolvosome a probable DNA-RuvA(4)-RuvB(12)-RuvC(2) complex forms which resolves the HJ.

It localises to the cytoplasm. It catalyses the reaction ATP + H2O = ADP + phosphate + H(+). In terms of biological role, the RuvA-RuvB-RuvC complex processes Holliday junction (HJ) DNA during genetic recombination and DNA repair, while the RuvA-RuvB complex plays an important role in the rescue of blocked DNA replication forks via replication fork reversal (RFR). RuvA specifically binds to HJ cruciform DNA, conferring on it an open structure. The RuvB hexamer acts as an ATP-dependent pump, pulling dsDNA into and through the RuvAB complex. RuvB forms 2 homohexamers on either side of HJ DNA bound by 1 or 2 RuvA tetramers; 4 subunits per hexamer contact DNA at a time. Coordinated motions by a converter formed by DNA-disengaged RuvB subunits stimulates ATP hydrolysis and nucleotide exchange. Immobilization of the converter enables RuvB to convert the ATP-contained energy into a lever motion, pulling 2 nucleotides of DNA out of the RuvA tetramer per ATP hydrolyzed, thus driving DNA branch migration. The RuvB motors rotate together with the DNA substrate, which together with the progressing nucleotide cycle form the mechanistic basis for DNA recombination by continuous HJ branch migration. Branch migration allows RuvC to scan DNA until it finds its consensus sequence, where it cleaves and resolves cruciform DNA. This chain is Holliday junction branch migration complex subunit RuvB, found in Dehalococcoides mccartyi (strain CBDB1).